A 274-amino-acid chain; its full sequence is Diaminopimelate epimerase (274 aa).

Residues Asn-11, Gln-44, and Asn-64 each contribute to the substrate site. The Proton donor role is filled by Cys-73. Residues 74–75 (GN), Asn-157, Asn-190, and 208–209 (ER) contribute to the substrate site. The Proton acceptor role is filled by Cys-217. 218–219 (GS) is a substrate binding site.

It belongs to the diaminopimelate epimerase family. As to quaternary structure, homodimer.

Its subcellular location is the cytoplasm. It carries out the reaction (2S,6S)-2,6-diaminopimelate = meso-2,6-diaminopimelate. Its pathway is amino-acid biosynthesis; L-lysine biosynthesis via DAP pathway; DL-2,6-diaminopimelate from LL-2,6-diaminopimelate: step 1/1. Functionally, catalyzes the stereoinversion of LL-2,6-diaminopimelate (L,L-DAP) to meso-diaminopimelate (meso-DAP), a precursor of L-lysine and an essential component of the bacterial peptidoglycan. This is Diaminopimelate epimerase from Erwinia tasmaniensis (strain DSM 17950 / CFBP 7177 / CIP 109463 / NCPPB 4357 / Et1/99).